Here is a 290-residue protein sequence, read N- to C-terminus: 4-hydroxy-tetrahydrodipicolinate synthase (290 aa).

Threonine 44 contacts pyruvate. The Proton donor/acceptor role is filled by tyrosine 131. Lysine 159 acts as the Schiff-base intermediate with substrate in catalysis. Isoleucine 201 provides a ligand contact to pyruvate.

It belongs to the DapA family. As to quaternary structure, homotetramer; dimer of dimers.

Its subcellular location is the cytoplasm. The enzyme catalyses L-aspartate 4-semialdehyde + pyruvate = (2S,4S)-4-hydroxy-2,3,4,5-tetrahydrodipicolinate + H2O + H(+). The protein operates within amino-acid biosynthesis; L-lysine biosynthesis via DAP pathway; (S)-tetrahydrodipicolinate from L-aspartate: step 3/4. Functionally, catalyzes the condensation of (S)-aspartate-beta-semialdehyde [(S)-ASA] and pyruvate to 4-hydroxy-tetrahydrodipicolinate (HTPA). The sequence is that of 4-hydroxy-tetrahydrodipicolinate synthase from Jannaschia sp. (strain CCS1).